Here is a 545-residue protein sequence, read N- to C-terminus: Chaperonin GroEL (545 aa).

ATP contacts are provided by residues 30–33 (TMGP), lysine 51, 87–91 (DGTTT), glycine 415, and aspartate 494.

It belongs to the chaperonin (HSP60) family. Forms a cylinder of 14 subunits composed of two heptameric rings stacked back-to-back. Interacts with the co-chaperonin GroES.

It is found in the cytoplasm. It catalyses the reaction ATP + H2O + a folded polypeptide = ADP + phosphate + an unfolded polypeptide.. Functionally, together with its co-chaperonin GroES, plays an essential role in assisting protein folding. The GroEL-GroES system forms a nano-cage that allows encapsulation of the non-native substrate proteins and provides a physical environment optimized to promote and accelerate protein folding. The polypeptide is Chaperonin GroEL (Helicobacter hepaticus (strain ATCC 51449 / 3B1)).